The primary structure comprises 406 residues: Glucose-1-phosphate adenylyltransferase (406 aa).

Residues Tyr-100, Gly-165, 181–182 (EK), and Ser-199 each bind alpha-D-glucose 1-phosphate.

It belongs to the bacterial/plant glucose-1-phosphate adenylyltransferase family. Homotetramer.

It carries out the reaction alpha-D-glucose 1-phosphate + ATP + H(+) = ADP-alpha-D-glucose + diphosphate. The protein operates within glycan biosynthesis; glycogen biosynthesis. Involved in the biosynthesis of ADP-glucose, a building block required for the elongation reactions to produce glycogen. Catalyzes the reaction between ATP and alpha-D-glucose 1-phosphate (G1P) to produce pyrophosphate and ADP-Glc. This Streptomyces avermitilis (strain ATCC 31267 / DSM 46492 / JCM 5070 / NBRC 14893 / NCIMB 12804 / NRRL 8165 / MA-4680) protein is Glucose-1-phosphate adenylyltransferase.